Consider the following 257-residue polypeptide: UPF0246 protein CLL_A2361 (257 aa).

This sequence belongs to the UPF0246 family.

This chain is UPF0246 protein CLL_A2361, found in Clostridium botulinum (strain Eklund 17B / Type B).